Here is a 341-residue protein sequence, read N- to C-terminus: Alpha-1,4-N-acetylglucosaminyltransferase (341 aa).

The Cytoplasmic portion of the chain corresponds to 1–4 (MLKE). A helical; Signal-anchor for type II membrane protein membrane pass occupies residues 5 to 25 (IYLSLSLVLVFACGLLYQLTM). Topologically, residues 26 to 341 (RSQCFFACLP…VSKKPGTGSR (316 aa)) are lumenal. An N-linked (GlcNAc...) asparagine glycan is attached at Asn-100. Positions 168–170 (DTD) match the DXD motif motif.

Belongs to the glycosyltransferase 32 family.

It localises to the golgi apparatus membrane. Its pathway is protein modification; protein glycosylation. Catalyzes the transfer of N-acetylglucosamine (GlcNAc) to core 2 branched O-glycans. Necessary for the synthesis of type III mucin which is specifically produced in the stomach, duodenum, and pancreatic duct. May protect against inflammation-associated gastric adenocarcinoma. The protein is Alpha-1,4-N-acetylglucosaminyltransferase of Mus musculus (Mouse).